The chain runs to 824 residues: C-Jun-amino-terminal kinase-interacting protein 2 (824 aa).

Disordered regions lie at residues 1 to 28, 40 to 160, 172 to 349, and 361 to 501; these read MADR…QDIS, ITDD…GFDL, CSPA…DSPW, and EGSS…APRD. Positions 77-110 are enriched in acidic residues; it reads DFQEFEMIDDNEEEDDEDEEEEEEEEEGDGEGQE. The segment at 110–275 is JNK-binding domain (JBD); that stretch reads EGGDPGSEAP…RMISSISETE (166 aa). The segment covering 141 to 156 has biased composition (polar residues); the sequence is LRLTTLGAQDSLNNNG. The necessary for interaction with FGF13 stretch occupies residues 239–498; it reads GRGGRRSSQE…PGGRGTGPSA (260 aa). Ser254, Ser302, and Ser305 each carry phosphoserine. The segment covering 268 to 305 has biased composition (low complexity); it reads ISSISETELELSSDGGSSSSGRSSHLTNSIEEASSPAS. Acidic residues predominate over residues 327-346; that stretch reads TNSEYESGSESEPDLSEDAD. Residues 416–432 show a composition bias toward pro residues; the sequence is APPPPAPAAPRPGPAQP. The segment covering 451–467 has biased composition (low complexity); the sequence is AAPGRAARPGRACSAAC. Residues 468–484 show a composition bias toward acidic residues; it reads SEEEDEEDDEEEEDAED. The SH3 domain maps to 604–665; sequence EREQTHRAVF…PAFYAHAVPG (62 aa). Residues 677-813 enclose the PID domain; sequence PCWVERFDVQ…FLEYYQEHLA (137 aa).

The protein belongs to the JIP scaffold family. In terms of assembly, forms homo- or heterooligomeric complexes. Binds specific components of the JNK signaling pathway namely JNK1, JNK2, JNK3, MAP2K7, MAP3K10, MAP3K11, MAP3K12 and MAPK13. Also binds the proline-rich domain-containing splice variant of apolipoprotein E receptor 2 (ApoER2). Binds the cytoplasmic tails of LRP1 and LRP2 (Megalin). Binds the TPR motif-containing C-terminal of kinesin light chain, Klc1, pre-assembled MAPK8IP1 scaffolding complexes are then transported as a cargo of kinesin, to the required subcellular location. Interacts with the cytoplasmic domain of APP. Interacts with DCLK2. Interacts with TIAM1 and TIAM2. Interacts with FGF13; enables the interaction with MAPK13 and may regulate the MAPK8IP2 scaffolding activity. Interacts with SH3RF2. In terms of tissue distribution, expressed mainly in the brain and pancreas, including insulin-secreting cells. In the nervous system, more abundantly expressed in the cerebellum, pituitary gland, occipital lobe and the amygdala. Also expressed in fetal brain. Very low levels found in uterus, ovary, prostate, colon, testis, adrenal gland, thyroid gland and salivary gland.

It is found in the cytoplasm. Functionally, the JNK-interacting protein (JIP) group of scaffold proteins selectively mediates JNK signaling by aggregating specific components of the MAPK cascade to form a functional JNK signaling module. JIP2 inhibits IL1 beta-induced apoptosis in insulin-secreting cells. May function as a regulator of vesicle transport, through interactions with the JNK-signaling components and motor proteins. The sequence is that of C-Jun-amino-terminal kinase-interacting protein 2 (MAPK8IP2) from Homo sapiens (Human).